The primary structure comprises 98 residues: MKAVGAWLLCLLLLGLALQGAASRAHQHSMEIRTPDINPAWYAGRGIRPVGRFGRRRAAPGDGPRPGPRRVPACFRLEGGAEPSRALPGRLTAQLVQE.

An N-terminal signal peptide occupies residues 1-22 (MKAVGAWLLCLLLLGLALQGAA). Disordered regions lie at residues 52-71 (RFGR…PRRV) and 79-98 (GGAE…LVQE). Phe-53 is subject to Phenylalanine amide. Residues 58 to 98 (AAPGDGPRPGPRRVPACFRLEGGAEPSRALPGRLTAQLVQE) constitute a propeptide that is removed on maturation.

Post-translationally, amidation of C-terminus is required for receptor interaction. In terms of tissue distribution, medulla oblongata and hypothalamus.

Its subcellular location is the secreted. In terms of biological role, stimulates prolactin (PRL) release and regulates the expression of prolactin through its receptor GPR10. May stimulate lactotrophs directly to secrete PRL. This chain is Prolactin-releasing peptide (PRLH), found in Bos taurus (Bovine).